Reading from the N-terminus, the 303-residue chain is UDP-3-O-acyl-N-acetylglucosamine deacetylase (303 aa).

Zn(2+)-binding residues include His-78, His-237, and Asp-241. The active-site Proton donor is His-264.

It belongs to the LpxC family. Requires Zn(2+) as cofactor.

The catalysed reaction is a UDP-3-O-[(3R)-3-hydroxyacyl]-N-acetyl-alpha-D-glucosamine + H2O = a UDP-3-O-[(3R)-3-hydroxyacyl]-alpha-D-glucosamine + acetate. It participates in glycolipid biosynthesis; lipid IV(A) biosynthesis; lipid IV(A) from (3R)-3-hydroxytetradecanoyl-[acyl-carrier-protein] and UDP-N-acetyl-alpha-D-glucosamine: step 2/6. Functionally, catalyzes the hydrolysis of UDP-3-O-myristoyl-N-acetylglucosamine to form UDP-3-O-myristoylglucosamine and acetate, the committed step in lipid A biosynthesis. The protein is UDP-3-O-acyl-N-acetylglucosamine deacetylase of Cellvibrio japonicus (strain Ueda107) (Pseudomonas fluorescens subsp. cellulosa).